Reading from the N-terminus, the 923-residue chain is Mitochondrial 10-formyltetrahydrofolate dehydrogenase (923 aa).

The N-terminal 19 residues, 1–19, are a transit peptide targeting the mitochondrion; not cleaved; that stretch reads MLWRGSQALRHFSTSRVYF. Residues 23–331 form a hydrolase domain region; that stretch reads LKLALIGQSL…PASQYFSAGE (309 aa). The residue at position 31 (serine 31) is a Phosphoserine. Lysine 60 bears the N6-succinyllysine mark. 110 to 112 lines the (6R)-10-formyltetrahydrofolate pocket; it reads QFI. The active-site Proton donor is histidine 128. Position 164 (aspartate 164) interacts with (6R)-10-formyltetrahydrofolate. The Carrier domain occupies 339–416; that stretch reads AEELKVAETI…DFIQKVVRRL (78 aa). An O-(pantetheine 4'-phosphoryl)serine modification is found at serine 375. The segment at 438–923 is aldehyde dehydrogenase domain; the sequence is TVKIPYQCFI…LKIKTVTLEY (486 aa). NADP(+) contacts are provided by residues 592 to 594 and 618 to 621; these read IPW and KPAQ. At serine 650 the chain carries Phosphoserine. NADP(+) is bound by residues 651–656 and 671–672; these read GGVAGQ and GS. Position 681 is an N6-succinyllysine (lysine 681). The active-site Proton acceptor is glutamate 694. 694–695 contributes to the NADP(+) binding site; it reads EL. Catalysis depends on cysteine 728, which acts as the Proton donor. NADP(+)-binding positions include lysine 778 and 825–827; that span reads ESF. Residue lysine 903 is modified to N6-acetyllysine.

The protein in the N-terminal section; belongs to the GART family. In the C-terminal section; belongs to the aldehyde dehydrogenase family. ALDH1L subfamily. Post-translationally, phosphopantetheinylation at Ser-375 by AASDHPPT is required for the formyltetrahydrofolate dehydrogenase activity.

The protein localises to the mitochondrion. It catalyses the reaction (6R)-10-formyltetrahydrofolate + NADP(+) + H2O = (6S)-5,6,7,8-tetrahydrofolate + CO2 + NADPH + H(+). In terms of biological role, mitochondrial 10-formyltetrahydrofolate dehydrogenase that catalyzes the NADP(+)-dependent conversion of 10-formyltetrahydrofolate to tetrahydrofolate and carbon dioxide. The polypeptide is Mitochondrial 10-formyltetrahydrofolate dehydrogenase (Mus musculus (Mouse)).